We begin with the raw amino-acid sequence, 348 residues long: D-alanine--D-alanine ligase (348 aa).

The ATP-grasp domain maps to 132–334 (KRVLESIGIP…YPDLIEELVT (203 aa)). 162-217 (LARLTFPIFVKPANMGSSVGISKAQTKVELRKAIQLALTYDSRVLIEQGVVAREIE) lines the ATP pocket. Residues Asp-288, Glu-301, and Asn-303 each contribute to the Mg(2+) site.

Belongs to the D-alanine--D-alanine ligase family. Mg(2+) serves as cofactor. Mn(2+) is required as a cofactor.

The protein localises to the cytoplasm. It catalyses the reaction 2 D-alanine + ATP = D-alanyl-D-alanine + ADP + phosphate + H(+). It participates in cell wall biogenesis; peptidoglycan biosynthesis. Cell wall formation. In Streptococcus pyogenes serotype M3 (strain SSI-1), this protein is D-alanine--D-alanine ligase.